Here is a 117-residue protein sequence, read N- to C-terminus: Hydrogenase maturation factor HypA (117 aa).

His2 serves as a coordination point for Ni(2+). Zn(2+) is bound by residues Cys73, Cys76, Cys89, and Cys92.

This sequence belongs to the HypA/HybF family.

Involved in the maturation of [NiFe] hydrogenases. Required for nickel insertion into the metal center of the hydrogenase. This Shewanella baltica (strain OS223) protein is Hydrogenase maturation factor HypA.